The sequence spans 187 residues: Large ribosomal subunit protein uL5 (187 aa).

The protein belongs to the universal ribosomal protein uL5 family. As to quaternary structure, part of the 50S ribosomal subunit; part of the 5S rRNA/L5/L18/L25 subcomplex. Contacts the 5S rRNA and the P site tRNA. Forms a bridge to the 30S subunit in the 70S ribosome.

This is one of the proteins that bind and probably mediate the attachment of the 5S RNA into the large ribosomal subunit, where it forms part of the central protuberance. In the 70S ribosome it contacts protein S13 of the 30S subunit (bridge B1b), connecting the 2 subunits; this bridge is implicated in subunit movement. Contacts the P site tRNA; the 5S rRNA and some of its associated proteins might help stabilize positioning of ribosome-bound tRNAs. In Saccharopolyspora erythraea (strain ATCC 11635 / DSM 40517 / JCM 4748 / NBRC 13426 / NCIMB 8594 / NRRL 2338), this protein is Large ribosomal subunit protein uL5.